Here is an 842-residue protein sequence, read N- to C-terminus: MKRWVSLDSGESEDPLPEDTCPDLLDGDSNAKPPPAKPHIFSTAKSRSRLFGKGDSEETSPMDCSYEEGELAPCPAITVSSVIIVQRSGDGPTCARQLSQDSVAAAGAEKPLKLYDRRRIFEAVAQNNCQELESLLCFLQRSKKRLTDSEFKDPETGKTCLLKAMLNLHSGQNDTIPLLLEIARQTDSLKEFVNASYTDSYYKGQTALHIAIERRNMALVTLLVENGADVQAAANGDFFKKTKGRPGFYFGELPLSLAACTNQLAIVKFLLQNSWQPADISARDSVGNTVLHALVEVADNTPDNTKFVTSMYNEILILGAKLHPTLKLEELINKKGLTPLALAAGSGKIGVLAYILQREILEPECRHLSRKFTEWAYGPVHSSLYDLSCIDTCERNSVLEVIAYSSSETPNRHDMLLVEPLNRLLQDKWDRVVKRIFYFNFFVYCLYMIIFTTAAYYRPVDGLPPYKLRNLPGDYFRVTGEILSVAGGVYFFFRGIQYFLQRRPSMKALFVDSYSEMLFFVQALFMLATVVLYFSHCKEYVATMVFSLALGWINMLYYTRGFQQMGIYAVMIEKMILRDLCRFMFVYLVFLFGFSTAVVTLIEDGKNSSTSAESTSHRWRGFGCRSSDSSYNSLYSTCLELFKFTIGMGDLEFTENYDFKAVFIILLLAYVILTYILLLNMLIALMGETVNKIAQESKSIWKLQRAITILDTEKGFLKCMRKAFRSGKLLQVGYTPDGKDDCRWCFRVDEVNWTTWNTNVGIINEDPGNCEGVKRTLSFSLRSGRVSGRNWKNFALVPLLRDASTRDRHPXPPEDVHLRPFVGSLKPGDAELFKDSVAAAEK.

Residues 1–64 (MKRWVSLDSG…DSEETSPMDC (64 aa)) form a disordered region. The Cytoplasmic portion of the chain corresponds to 1–435 (MKRWVSLDSG…QDKWDRVVKR (435 aa)). Over residues 10 to 21 (GESEDPLPEDTC) the composition is skewed to acidic residues. Residues 113 to 141 (KLYDRRRIFEAVAQNNCQELESLLCFLQR) form an ANK 1 repeat. Arg118 is an ATP binding site. Residue Thr147 is modified to Phosphothreonine; by PKA; in vitro. Residues 156-188 (TGKTCLLKAMLNLHSGQNDTIPLLLEIARQTDS) form an ANK 2 repeat. Residues Lys158, Lys163, Asn167, 202 to 205 (YKGQ), and 213 to 214 (ER) each bind ATP. ANK repeat units follow at residues 206-231 (TALH…ADVQ), 252-279 (ELPL…QPAD), 288-324 (NTVL…KLHP), and 338-361 (TPLA…REIL). Thr373 is subject to Phosphothreonine; by PKA; in vitro. The stretch at 396–418 (NSVLEVIAYSSSETPNRHDMLLV) is one ANK 7 repeat. Residues 436-457 (IFYFNFFVYCLYMIIFTTAAYY) form a helical membrane-spanning segment. Topologically, residues 458–475 (RPVDGLPPYKLRNLPGDY) are extracellular. The helical transmembrane segment at 476–500 (FRVTGEILSVAGGVYFFFRGIQYFL) threads the bilayer. Over 501-513 (QRRPSMKALFVDS) the chain is Cytoplasmic. Ser505 carries the post-translational modification Phosphoserine; by PKC/PRKCE. 514–515 (YS) contacts resiniferatoxin. Residues 514–535 (YSEMLFFVQALFMLATVVLYFS) form a helical membrane-spanning segment. Residues 536 to 538 (HCK) lie on the Extracellular side of the membrane. Residues 539–559 (EYVATMVFSLALGWINMLYYT) traverse the membrane as a helical segment. Arg560 contacts resiniferatoxin. The Cytoplasmic portion of the chain corresponds to 560-562 (RGF). A helical transmembrane segment spans residues 563–601 (QQMGIYAVMIEKMILRDLCRFMFVYLVFLFGFSTAVVTL). Topologically, residues 602–633 (IEDGKNSSTSAESTSHRWRGFGCRSSDSSYNS) are extracellular. The N-linked (GlcNAc...) asparagine glycan is linked to Asn607. Positions 634 to 655 (LYSTCLELFKFTIGMGDLEFTE) form an intramembrane region, pore-forming. Gly647 serves as a coordination point for Na(+). The Selectivity filter signature appears at 647–650 (GMGD). Asp650 provides a ligand contact to Ca(2+). Topologically, residues 656–659 (NYDF) are extracellular. A helical membrane pass occupies residues 660-686 (KAVFIILLLAYVILTYILLLNMLIALM). The Cytoplasmic portion of the chain corresponds to 687–842 (GETVNKIAQE…FKDSVAAAEK (156 aa)). Positions 688–716 (ETVNKIAQESKSIWKLQRAITILDTEKGF) are AD. The residue at position 708 (Thr708) is a Phosphothreonine. The interaction with calmodulin stretch occupies residues 771–805 (EGVKRTLSFSLRSGRVSGRNWKNFALVPLLRDAST). Position 778 is a phosphoserine (Ser778). The interval 781–796 (LRSGRVSGRNWKNFAL) is required for PIP2-mediated channel inhibition. Position 804 is a phosphoserine; by PKC/PRKCE and PKC/PRKCZ (Ser804). Ser824 is subject to Phosphoserine.

This sequence belongs to the transient receptor (TC 1.A.4) family. TrpV subfamily. TRPV1 sub-subfamily. Homotetramer. Interacts with PIRT. May also form a heteromeric channel with TRPV3. Interacts with CALM, PRKCM and CSK. Interacts with PRKCG and NTRK1, probably by forming a trimeric complex. Interacts with the Scolopendra mutilans RhTx toxin. Interacts with TMEM100. Interacts with PACS2. Post-translationally, phosphorylation by PKA reverses capsaicin-induced dephosphorylation at multiple sites. Phosphorylation by CAMKII seems to regulate binding to vanilloids. Phosphorylated and modulated by PRKCE, PRKCM and probably PRKCZ. Dephosphorylation by calcineurin seems to lead to receptor desensitization and phosphorylation by CAMKII recovers activity.

The protein resides in the postsynaptic cell membrane. It localises to the cell projection. Its subcellular location is the dendritic spine membrane. The protein localises to the cell membrane. The catalysed reaction is Ca(2+)(in) = Ca(2+)(out). The enzyme catalyses Mg(2+)(in) = Mg(2+)(out). It carries out the reaction Na(+)(in) = Na(+)(out). It catalyses the reaction K(+)(in) = K(+)(out). Its activity is regulated as follows. The channel is sensitized by ATP binding. Repeated stimulation with capsaicin gives rise to progressively smaller responses, due to desensitization. This desensitization is triggered by the influx of calcium ions and is inhibited by elevated ATP levels. Ca(2+) and CALM displace ATP from its binding site and trigger a conformation change that leads to a closed, desensitized channel. The double-knot toxin (DkTx) from the Chinese earth tiger tarantula activates the channel and traps it in an open conformation. The Scolopendra mutilans RhTx toxin potentiates the heat activation pathway mediated by this channel by binding to the charge-rich outer pore region (in an activated state). Channel activity is activated via the interaction with PIRT and phosphatidylinositol 4,5-bisphosphate (PIP2). Both PIRT and PIP2 are required to activate channel activity. Intracellular PIP2 inhibits desensitization. In terms of biological role, non-selective calcium permeant cation channel involved in detection of noxious chemical and thermal stimuli. Seems to mediate proton influx and may be involved in intracellular acidosis in nociceptive neurons. Involved in mediation of inflammatory pain and hyperalgesia. Sensitized by a phosphatidylinositol second messenger system activated by receptor tyrosine kinases, which involves PKC isozymes and PCL. Activation by vanilloids, like capsaicin, and temperatures higher than 42 degrees Celsius. Upon activation, exhibits a time- and Ca(2+)-dependent outward rectification, followed by a long-lasting refractory state. Mild extracellular acidic pH (6.5) potentiates channel activation by noxious heat and vanilloids, whereas acidic conditions (pH &lt;6) directly activate the channel. Can be activated by endogenous compounds, including 12-hydroperoxytetraenoic acid and bradykinin. Acts as ionotropic endocannabinoid receptor with central neuromodulatory effects. Triggers a form of long-term depression (TRPV1-LTD) mediated by the endocannabinoid anandamine in the hippocampus and nucleus accumbens by affecting AMPA receptors endocytosis. In Oryctolagus cuniculus (Rabbit), this protein is Transient receptor potential cation channel subfamily V member 1 (Trpv1).